The sequence spans 336 residues: Immune-associated nucleotide-binding protein 13 (336 aa).

Residues 15–221 form the AIG1-type G domain; it reads KPERTLVLLG…YMADLSHELR (207 aa). The interval 24–31 is G1; it reads GRTGNGKS. Residues 24-32 and Ser45 each bind GTP; that span reads GRTGNGKSA. The interval 51-55 is G2; it reads FITKE. Positions 73–76 are G3; the sequence is DTPG. The tract at residues 143–146 is G4; the sequence is TNED. The segment at 179 to 181 is G5; sequence DNS. Asn180 is a binding site for GTP. The stretch at 265–328 forms a coiled coil; the sequence is KEKISNQLKE…EKETASLRTE (64 aa).

This sequence belongs to the TRAFAC class TrmE-Era-EngA-EngB-Septin-like GTPase superfamily. AIG1/Toc34/Toc159-like paraseptin GTPase family. IAN subfamily. Expressed in pollen grains.

The sequence is that of Immune-associated nucleotide-binding protein 13 from Arabidopsis thaliana (Mouse-ear cress).